The sequence spans 747 residues: Putative ankyrin repeat protein FPV222 (747 aa).

ANK repeat units follow at residues 38–67 (DNCTMLYTAVEHRYIDIIKLLLDHGADPNI), 103–132 (NYRNTFFVYNENRNLEIAKMLIQNGALVNM), 136–165 (KNITPLHIASSSGSYKMVELLLLHGANTNA), 169–198 (YGETSLHYSVSSNDLNISELLIENGTNVNV), 202–231 (DSITALIIAVEIMSIDLVRLLLDKGADTNA), 234–263 (LERFKLYVTETKQNNNILKYLNTNNVNTNV), 294–323 (PCTVPVTLATRKGSKELLEILLEYGCNPDI), 328–357 (TSTYAMHYAVIRKHYEMLNILIRYDAYTDV), 361–393 (QQNTPAHYAVKLPISESCKYLKLLKLAGASFNL), 397–426 (KGRTPLHTACKYNNTEAVKYLIESGCDTNI), 430–460 (MSFTPLNYAVYYEREDTVKILLESGCVDPNL), 464–493 (KEVSPIIQAIKRNNKNIIKMLLNAGIDIKP), 495–524 (NECYGLHMLAALHNKDLLKWLLCTISELEV), and 529–559 (DHYVPLASYVAELSDIRIMEILIEKGLDLNK).

The protein is Putative ankyrin repeat protein FPV222 of Vertebrata (FPV).